The primary structure comprises 804 residues: MTNSNSITPVMQQYVTLKQQYKEYLLFYRLGDFYELFFDDAIKTSKILNIVLTKKGNVPMCGVPFHSSETYLNKLVKLGYKIAICEQLETSEEARKRGYKSLVKRDVVRIVTPGTIVEDSLLEAKESNYLACIVMIKDSCAIAWLELSTGLFCYHMTYISKLDSDLLRIGPKELLVADDLLEIEAVYSIIKKYRFSITQYSSSFFDENRAYNTLCNVYGVSTLKGLGDLKGVEISVCGSLLEYVIATQKGSLPKLGFPKAYVQSDFMFIDAAALRNLELFSTQSGELEGSLIASIDFTVTASGGRLLKRCLSAPLASADAINRRLSVVEFFVNNQNLYKSVRQVLRGIADIERILTRVKIARCSPKDLYSLKLTLEKTCELVELLCKFNIDIISEFCLRLGRYEDLICILNNSLLQNSVSSVKDGGFINPECDAQLSEYIYIQECSNQLIQELRDRYRNITNIQSLKILYNNILGYYVEVSSNHLIDDKNFIHRQSLANNVRYTTTELKELESKIISAKDASISLEIKIFGQLCSDVIKYADKITITAHTIAEIDMLTSFAELAVQYSYSKPIIDDSYEFNIKKGKHPVVERNGKFIANDINLSSEQRVHLITGPNMAGKSTFLRQNALIGILAHIGSFVPAEYAHIGVIDKVFSRVGASDNIVCGYSTFMVEMIETAAVINQATERSFVILDEIGRGTGTYDGLSIAWSVIEQIHNVNKSRAIFATHYHELSKLDKYLKHIKCFCMKVEEWDGKVVFLHEIIPGASDKSYGIHVAKLAGFPQSVVNRAEYLMDKLKTNEDLLT.

614-621 (GPNMAGKS) provides a ligand contact to ATP.

The protein belongs to the DNA mismatch repair MutS family.

Its function is as follows. This protein is involved in the repair of mismatches in DNA. It is possible that it carries out the mismatch recognition step. This protein has a weak ATPase activity. This chain is DNA mismatch repair protein MutS, found in Ehrlichia ruminantium (strain Welgevonden).